The sequence spans 216 residues: DNA gyrase subunit B (216 aa).

Positions 140 to 216 constitute a Toprim domain; that stretch reads SELYLVEGDS…PDKLRYHKII (77 aa).

This sequence belongs to the type II topoisomerase GyrB family. In terms of assembly, heterotetramer, composed of two GyrA and two GyrB chains. In the heterotetramer, GyrA contains the active site tyrosine that forms a transient covalent intermediate with DNA, while GyrB binds cofactors and catalyzes ATP hydrolysis.

It is found in the cytoplasm. It catalyses the reaction ATP-dependent breakage, passage and rejoining of double-stranded DNA.. A type II topoisomerase that negatively supercoils closed circular double-stranded (ds) DNA in an ATP-dependent manner to modulate DNA topology and maintain chromosomes in an underwound state. Negative supercoiling favors strand separation, and DNA replication, transcription, recombination and repair, all of which involve strand separation. Also able to catalyze the interconversion of other topological isomers of dsDNA rings, including catenanes and knotted rings. Type II topoisomerases break and join 2 DNA strands simultaneously in an ATP-dependent manner. The chain is DNA gyrase subunit B (gyrB) from Acinetobacter venetianus (strain ATCC 31012 / DSM 23050 / BCRC 14357 / CCUG 45561 / CIP 110063 / KCTC 2702 / LMG 19082 / RAG-1).